We begin with the raw amino-acid sequence, 216 residues long: uncharacterized protein (216 aa).

One can recognise an Integrase catalytic domain in the interval 54-215 (TATQPNEKWT…SPVNYRTQSL (162 aa)).

Belongs to the transposase IS3/IS150/IS904 family.

This is an uncharacterized protein from Haemophilus influenzae (strain ATCC 51907 / DSM 11121 / KW20 / Rd).